Consider the following 338-residue polypeptide: Clathrin light chain 1 (338 aa).

Residues 1 to 111 are disordered; that stretch reads MATFDDGDFP…NEMREEGFQR (111 aa). Polar residues-rich tracts occupy residues 29 to 47 and 61 to 73; these read SEAQQPPTQHQSGGFSSFN and SSPNHDFSSPFES. Over residues 102–111 the composition is skewed to basic and acidic residues; that stretch reads NEMREEGFQR. Residues 102 to 163 are involved in binding clathrin heavy chain; it reads NEMREEGFQR…TIETNKTDNR (62 aa). A coiled-coil region spans residues 122–142; that stretch reads LEEKEKKEKEMRNQIITEAED. The tract at residues 192 to 338 is disordered; sequence IPREVPNIEK…VTEAEGTKAE (147 aa). The segment covering 197-212 has biased composition (basic and acidic residues); the sequence is PNIEKKRGKKDPDKKP. The span at 241–253 shows a compositional bias: pro residues; that stretch reads NPPPHMMPPPPPA. The span at 254–304 shows a compositional bias: basic and acidic residues; the sequence is KDAKDGKDAKDGKDAKTGKDGKDAKGGKDAKDLKDGKPADPKVTEEKRPSP.

It belongs to the clathrin light chain family. Clathrin coats are formed from molecules containing 3 heavy chains and 3 light chains.

Its subcellular location is the cytoplasmic vesicle membrane. The protein localises to the membrane. The protein resides in the coated pit. In terms of biological role, clathrin is the major protein of the polyhedral coat of coated pits and vesicles. The sequence is that of Clathrin light chain 1 from Arabidopsis thaliana (Mouse-ear cress).